Consider the following 301-residue polypeptide: NAD kinase (301 aa).

The active-site Proton acceptor is aspartate 81. NAD(+) contacts are provided by residues 81 to 82 (DG), 155 to 156 (NE), histidine 166, arginine 183, aspartate 185, 196 to 201 (TAYSLS), and glutamine 256.

Belongs to the NAD kinase family. The cofactor is a divalent metal cation.

It is found in the cytoplasm. The catalysed reaction is NAD(+) + ATP = ADP + NADP(+) + H(+). Involved in the regulation of the intracellular balance of NAD and NADP, and is a key enzyme in the biosynthesis of NADP. Catalyzes specifically the phosphorylation on 2'-hydroxyl of the adenosine moiety of NAD to yield NADP. The sequence is that of NAD kinase from Mannheimia succiniciproducens (strain KCTC 0769BP / MBEL55E).